We begin with the raw amino-acid sequence, 294 residues long: Protoheme IX farnesyltransferase (294 aa).

Transmembrane regions (helical) follow at residues 24 to 44 (VVLL…PGWV), 48 to 68 (LIAF…AINH), 96 to 116 (ALWF…LFVN), 118 to 138 (LTAL…TGYL), 146 to 166 (IVIG…AVTG), 172 to 192 (ALLL…ALAI), 224 to 244 (VLLL…WIYL), 245 to 265 (LGAL…YFTD), and 268 to 288 (VVAM…FVFL).

The protein belongs to the UbiA prenyltransferase family. Protoheme IX farnesyltransferase subfamily.

It is found in the cell inner membrane. The enzyme catalyses heme b + (2E,6E)-farnesyl diphosphate + H2O = Fe(II)-heme o + diphosphate. The protein operates within porphyrin-containing compound metabolism; heme O biosynthesis; heme O from protoheme: step 1/1. Its function is as follows. Converts heme B (protoheme IX) to heme O by substitution of the vinyl group on carbon 2 of heme B porphyrin ring with a hydroxyethyl farnesyl side group. This is Protoheme IX farnesyltransferase from Legionella pneumophila (strain Paris).